The chain runs to 227 residues: PKHD-type hydroxylase NE2125 (227 aa).

Residues 78 to 179 (KIVPPFFNRY…RLACFMFIQS (102 aa)) form the Fe2OG dioxygenase domain. Positions 97, 99, and 160 each coordinate Fe cation. Arg-170 provides a ligand contact to 2-oxoglutarate.

It depends on Fe(2+) as a cofactor. Requires L-ascorbate as cofactor.

The chain is PKHD-type hydroxylase NE2125 from Nitrosomonas europaea (strain ATCC 19718 / CIP 103999 / KCTC 2705 / NBRC 14298).